The chain runs to 281 residues: Polyamine aminopropyltransferase (281 aa).

The PABS domain maps to 2 to 236 (DLWLKEGQIS…GYWSFTIGSK (235 aa)). Q31 lines the S-methyl-5'-thioadenosine pocket. 2 residues coordinate spermidine: H62 and D86. Residues E106 and 138–139 (DG) each bind S-methyl-5'-thioadenosine. The active-site Proton acceptor is the D156. 156-159 (DSTD) contributes to the spermidine binding site.

This sequence belongs to the spermidine/spermine synthase family. In terms of assembly, homodimer or homotetramer.

The protein localises to the cytoplasm. The catalysed reaction is S-adenosyl 3-(methylsulfanyl)propylamine + putrescine = S-methyl-5'-thioadenosine + spermidine + H(+). It participates in amine and polyamine biosynthesis; spermidine biosynthesis; spermidine from putrescine: step 1/1. Functionally, catalyzes the irreversible transfer of a propylamine group from the amino donor S-adenosylmethioninamine (decarboxy-AdoMet) to putrescine (1,4-diaminobutane) to yield spermidine. The sequence is that of Polyamine aminopropyltransferase from Clostridium tetani (strain Massachusetts / E88).